The chain runs to 341 residues: THO complex subunit 6 homolog (341 aa).

WD repeat units lie at residues 22-61, 74-112, 124-163, 166-205, 215-254, 256-293, and 295-339; these read RLHM…SSEA, AHDG…GCKE, LEVP…FTRA, GHTD…EVQT, SRPH…PTTV, PIRA…KAQV, and GSSP…AFSL. Serine 180 carries the phosphoserine modification.

This sequence belongs to the WD repeat THOC6 family. Component of the THO subcomplex, which is composed of THOC1, THOC2, THOC3, THOC5, THOC6 and THOC7. The THO subcomplex interacts with DDX39B to form the THO-DDX39B complex which multimerizes into a 28-subunit tetrameric assembly. Component of the transcription/export (TREX) complex at least composed of ALYREF/THOC4, DDX39B, SARNP/CIP29, CHTOP and the THO subcomplex; in the complex interacts with THOC5; together with THOC5 and THOC7, plays a key structural role in the oligomerization of the THO-DDX39B complex. TREX seems to have a dynamic structure involving ATP-dependent remodeling.

Its subcellular location is the nucleus. It localises to the nucleus speckle. Functionally, component of the THO subcomplex of the TREX complex which is thought to couple mRNA transcription, processing and nuclear export, and which specifically associates with spliced mRNA and not with unspliced pre-mRNA. Plays a key structural role in the oligomerization of the THO-DDX39B complex. TREX is recruited to spliced mRNAs by a transcription-independent mechanism, binds to mRNA upstream of the exon-junction complex (EJC) and is recruited in a splicing- and cap-dependent manner to a region near the 5' end of the mRNA where it functions in mRNA export to the cytoplasm via the TAP/NXF1 pathway. Plays a role in apoptosis negative control involved in brain development. The polypeptide is THO complex subunit 6 homolog (Thoc6) (Rattus norvegicus (Rat)).